A 138-amino-acid chain; its full sequence is Acidic phospholipase A2 (138 aa).

A signal peptide spans 1–16 (MRTLWIVAVLLLGVEG). 7 disulfide bridges follow: Cys-42-Cys-131, Cys-44-Cys-60, Cys-59-Cys-111, Cys-65-Cys-138, Cys-66-Cys-104, Cys-73-Cys-97, and Cys-91-Cys-102. Residues Tyr-43, Gly-45, and Gly-47 each contribute to the Ca(2+) site. His-63 is an active-site residue. Asp-64 lines the Ca(2+) pocket. Residue Asp-105 is part of the active site.

It belongs to the phospholipase A2 family. Group II subfamily. D49 sub-subfamily. Homodimer. Requires Ca(2+) as cofactor. As to expression, expressed by the venom gland.

The protein localises to the secreted. It catalyses the reaction a 1,2-diacyl-sn-glycero-3-phosphocholine + H2O = a 1-acyl-sn-glycero-3-phosphocholine + a fatty acid + H(+). PLA2 catalyzes the calcium-dependent hydrolysis of the 2-acyl groups in 3-sn-phosphoglycerides. In Crotalus atrox (Western diamondback rattlesnake), this protein is Acidic phospholipase A2.